Here is a 514-residue protein sequence, read N- to C-terminus: 2-isopropylmalate synthase (514 aa).

The region spanning 8 to 270 (IRIFDTTLRD…DCGVVTEQLF (263 aa)) is the Pyruvate carboxyltransferase domain. Asp-17, His-205, His-207, and Asn-241 together coordinate Mn(2+). The regulatory domain stretch occupies residues 394–514 (RLVNLSVQCS…KEEEQEKEGI (121 aa)).

It belongs to the alpha-IPM synthase/homocitrate synthase family. LeuA type 1 subfamily. Homodimer. It depends on Mn(2+) as a cofactor.

It localises to the cytoplasm. The catalysed reaction is 3-methyl-2-oxobutanoate + acetyl-CoA + H2O = (2S)-2-isopropylmalate + CoA + H(+). It functions in the pathway amino-acid biosynthesis; L-leucine biosynthesis; L-leucine from 3-methyl-2-oxobutanoate: step 1/4. In terms of biological role, catalyzes the condensation of the acetyl group of acetyl-CoA with 3-methyl-2-oxobutanoate (2-ketoisovalerate) to form 3-carboxy-3-hydroxy-4-methylpentanoate (2-isopropylmalate). The sequence is that of 2-isopropylmalate synthase from Nitratidesulfovibrio vulgaris (strain DSM 19637 / Miyazaki F) (Desulfovibrio vulgaris).